We begin with the raw amino-acid sequence, 642 residues long: Threonine--tRNA ligase (642 aa).

The TGS domain occupies 1–61 (MPVITLPDGS…ENDAQLSIIT (61 aa)). The tract at residues 243–534 (DHRKIGKQLD…LTEEFAGFFP (292 aa)) is catalytic. N6-acetyllysine is present on K286. Positions 334, 385, and 511 each coordinate Zn(2+).

The protein belongs to the class-II aminoacyl-tRNA synthetase family. Homodimer. Zn(2+) serves as cofactor.

The protein localises to the cytoplasm. It catalyses the reaction tRNA(Thr) + L-threonine + ATP = L-threonyl-tRNA(Thr) + AMP + diphosphate + H(+). In terms of biological role, catalyzes the attachment of threonine to tRNA(Thr) in a two-step reaction: L-threonine is first activated by ATP to form Thr-AMP and then transferred to the acceptor end of tRNA(Thr). Also edits incorrectly charged L-seryl-tRNA(Thr). The chain is Threonine--tRNA ligase from Escherichia coli O157:H7.